The chain runs to 456 residues: Outer membrane protein assembly factor BamB (456 aa).

Positions 1-19 (MKKLLFITAPLLLSVLTAS) are cleaved as a signal peptide. Cys20 is lipidated: N-palmitoyl cysteine. Cys20 carries S-diacylglycerol cysteine lipidation.

It belongs to the BamB family. As to quaternary structure, part of the Bam complex.

It is found in the cell outer membrane. Functionally, part of the outer membrane protein assembly complex, which is involved in assembly and insertion of beta-barrel proteins into the outer membrane. The chain is Outer membrane protein assembly factor BamB from Francisella tularensis subsp. tularensis (strain SCHU S4 / Schu 4).